Consider the following 1599-residue polypeptide: Protein TOPAZ1 (1599 aa).

4 disordered regions span residues 1 to 42, 159 to 185, 802 to 836, and 867 to 889; these read MVAQ…KESL, GCMHVPENSSKSKKENPRSLIDKTDPS, PNVAEEHQSADSKHMELPEKKEPSDHLRELPVPDP, and VTHETSSNEKPGGLSEQTKSSDL. Composition is skewed to basic and acidic residues over residues 168–183 and 805–832; these read SKSKKENPRSLIDKTD and AEEHQSADSKHMELPEKKEPSDHLRELP. Positions 874 to 884 are enriched in polar residues; that stretch reads NEKPGGLSEQT.

In terms of tissue distribution, expressed in both adult testis and fetal ovary, mostly in germ cells (at protein level).

The protein resides in the cytoplasm. The protein localises to the cytosol. Its function is as follows. Important for normal spermatogenesis and male fertility. Specifically required for progression to the post-meiotic stages of spermatocyte development. Seems to be necessary for normal expression levels of a number of testis-expressed gene transcripts, although its role in this process is unclear. In Ovis aries (Sheep), this protein is Protein TOPAZ1 (TOPAZ1).